The primary structure comprises 698 residues: Adhesion G protein-coupled receptor F4 (698 aa).

The N-terminal stretch at 1 to 19 (MKPWIAMVCCLVFFLTTEC) is a signal peptide. Over 20–409 (SHSKPKTHRK…VKNTILNHIT (390 aa)) the chain is Extracellular. N-linked (GlcNAc...) asparagine glycans are attached at residues asparagine 61, asparagine 168, asparagine 213, asparagine 268, asparagine 290, asparagine 344, and asparagine 375. One can recognise a GAIN-B domain in the interval 250–401 (RISHSSSEHS…SILMSSKPVK (152 aa)). Cystine bridges form between cysteine 353/cysteine 380 and cysteine 368/cysteine 382. The segment at 353-401 (CVSWDPATGQWDESPCTVMSDINSTVKCRCRHTKAVTSFSILMSSKPVK) is GPS. A helical transmembrane segment spans residues 410–430 (FIGLSISIFSLVLCLVIEAIV). Residues 431 to 444 (WSRVVVTEISYMRH) lie on the Cytoplasmic side of the membrane. A helical transmembrane segment spans residues 445-465 (VCIVNIAVSLLTANVWFIIGS). Asparagine 466 carries N-linked (GlcNAc...) asparagine glycosylation. The Extracellular segment spans residues 466 to 486 (NFSANVQEDHKWCVAVTFLCH). Residues 487–507 (FFFLSLFFWMLFKALLIVYGI) traverse the membrane as a helical segment. The Cytoplasmic portion of the chain corresponds to 508–518 (LVVFRRMMKSR). Residues 519–539 (MMAIGFAIGYGCPLVIAVITV) traverse the membrane as a helical segment. Topologically, residues 540–566 (TVTEPGEGYTRKDACWLNWNQTKALFA) are extracellular. Residue asparagine 559 is glycosylated (N-linked (GlcNAc...) asparagine). A helical membrane pass occupies residues 567–587 (FAIPALAIVAVNLLVVLAVAI). Residues 588 to 611 (NTQRPLIGSSKSQDMAIVFRISKN) are Cytoplasmic-facing. A helical transmembrane segment spans residues 612–632 (VAILTPLLGLTWGFGLTTLLE). The Extracellular portion of the chain corresponds to 633–635 (GVH). A helical membrane pass occupies residues 636–656 (LVFHIIFALLNAFQGFFILLF). At 657–698 (GTIMDHKIRDALRMRVSSLKGKSRAAEKVSLSPANGSRILNR) the chain is on the cytoplasmic side.

It belongs to the G-protein coupled receptor 2 family. Adhesion G-protein coupled receptor (ADGR) subfamily. As to expression, expressed in squamous epithelia.

It localises to the membrane. Functionally, orphan receptor. This is Adhesion G protein-coupled receptor F4 (Adgrf4) from Mus musculus (Mouse).